The chain runs to 1393 residues: DNA-directed RNA polymerase subunit beta' (1393 aa).

The Zn(2+) site is built by cysteine 70, cysteine 72, cysteine 85, and cysteine 88. Aspartate 461, aspartate 463, and aspartate 465 together coordinate Mg(2+). Zn(2+) contacts are provided by cysteine 804, cysteine 877, cysteine 884, and cysteine 887.

This sequence belongs to the RNA polymerase beta' chain family. In terms of assembly, the RNAP catalytic core consists of 2 alpha, 1 beta, 1 beta' and 1 omega subunit. When a sigma factor is associated with the core the holoenzyme is formed, which can initiate transcription. Mg(2+) is required as a cofactor. It depends on Zn(2+) as a cofactor.

It carries out the reaction RNA(n) + a ribonucleoside 5'-triphosphate = RNA(n+1) + diphosphate. In terms of biological role, DNA-dependent RNA polymerase catalyzes the transcription of DNA into RNA using the four ribonucleoside triphosphates as substrates. The polypeptide is DNA-directed RNA polymerase subunit beta' (Rhodospirillum rubrum (strain ATCC 11170 / ATH 1.1.1 / DSM 467 / LMG 4362 / NCIMB 8255 / S1)).